Consider the following 397-residue polypeptide: Succinate--CoA ligase [ADP-forming] subunit beta (397 aa).

The region spanning K9–Q254 is the ATP-grasp domain. ATP-binding positions include K46, G53 to G55, E109, A112, and E117. 2 residues coordinate Mg(2+): N209 and D223. Substrate is bound by residues N274 and G331 to M333.

This sequence belongs to the succinate/malate CoA ligase beta subunit family. In terms of assembly, heterotetramer of two alpha and two beta subunits. The cofactor is Mg(2+).

It carries out the reaction succinate + ATP + CoA = succinyl-CoA + ADP + phosphate. The enzyme catalyses GTP + succinate + CoA = succinyl-CoA + GDP + phosphate. It participates in carbohydrate metabolism; tricarboxylic acid cycle; succinate from succinyl-CoA (ligase route): step 1/1. Functionally, succinyl-CoA synthetase functions in the citric acid cycle (TCA), coupling the hydrolysis of succinyl-CoA to the synthesis of either ATP or GTP and thus represents the only step of substrate-level phosphorylation in the TCA. The beta subunit provides nucleotide specificity of the enzyme and binds the substrate succinate, while the binding sites for coenzyme A and phosphate are found in the alpha subunit. This chain is Succinate--CoA ligase [ADP-forming] subunit beta, found in Rhizobium rhizogenes (strain K84 / ATCC BAA-868) (Agrobacterium radiobacter).